A 188-amino-acid polypeptide reads, in one-letter code: Large ribosomal subunit protein eL18 (188 aa).

Lys-119 participates in a covalent cross-link: Glycyl lysine isopeptide (Lys-Gly) (interchain with G-Cter in SUMO2). The residue at position 130 (Ser-130) is a Phosphoserine. The tract at residues Arg-150–Asn-188 is disordered. Basic residues-rich tracts occupy residues His-151 to Gly-171 and Gly-179 to Asn-188. Thr-158 carries the post-translational modification Phosphothreonine. Lys-164 is covalently cross-linked (Glycyl lysine isopeptide (Lys-Gly) (interchain with G-Cter in SUMO2)).

This sequence belongs to the eukaryotic ribosomal protein eL18 family. Component of the large ribosomal subunit.

The protein localises to the cytoplasm. It is found in the cytosol. It localises to the rough endoplasmic reticulum. Component of the large ribosomal subunit. The ribosome is a large ribonucleoprotein complex responsible for the synthesis of proteins in the cell. In Oryctolagus cuniculus (Rabbit), this protein is Large ribosomal subunit protein eL18 (RPL18).